Consider the following 85-residue polypeptide: Acyl carrier protein ScoB (85 aa).

Residues 1 to 77 (MPAPLTLDGF…QWWQLLSARQ (77 aa)) form the Carrier domain. S38 bears the O-(pantetheine 4'-phosphoryl)serine mark.

The protein belongs to the acyl carrier protein (ACP) family. It depends on pantetheine 4'-phosphate as a cofactor.

Its pathway is lipid metabolism; fatty acid metabolism. In terms of biological role, acyl-carrier protein (ACP) involved in the biosynthesis of a unique class of isonitrile lipopeptides (INLPs). Is the dedicated ACP for the loading of activated acyl groups catalyzed by ScoC. The sequence is that of Acyl carrier protein ScoB from Streptomyces coeruleorubidus.